The following is a 473-amino-acid chain: MAKSARTKTARPATRTETDSFGPIEVPSDRYWGAQTERSRQNFRIGTDRMPISLVHALGIVKLAAAQSNRELGLLDQRRASAIIRAAREVIDGSLDDHFPLVVWQTGSGTQTNMNLNEVIANRANELLGGELGAKKPVHPNDHVNMSQSSNDSFPTAMHIAAASRITADLVPALGELLRALRKKEKEFAKIVKIGRTHTQDATPLTLGQEFSGYAAQVESGIARLKVAVKELYPLAQGGTAVGTGLNAKPRFARLFAKHVAGITKLPFTSAANKFEALASNDAYVLAHGAISSVATGLFKIANDIRLLGSGPRSGLGELILPENEPGSSIMPGKVNPTQCEAMTMVCCQVFGNHTAITVAGSQGHFELNVYKPVLAYNMLHSIRLMADAARSFTEHCVSGIRADEKRISELMQRSLMLVTALAPKIGYDNAAKVAKTAHANGTTLKEEALRLGFVTADEFDRLVQPEKMTKPG.

The segment at Met1 to Ser28 is disordered. Residues Ser108–Thr110, His139–Asp142, Ser149–Asn151, and Thr197 each bind substrate. His198 acts as the Proton donor/acceptor in catalysis. The active site involves Ser328. Substrate contacts are provided by residues Ser329 and Lys334–Asn336.

It belongs to the class-II fumarase/aspartase family. Fumarase subfamily. As to quaternary structure, homotetramer.

Its subcellular location is the cytoplasm. It carries out the reaction (S)-malate = fumarate + H2O. It participates in carbohydrate metabolism; tricarboxylic acid cycle; (S)-malate from fumarate: step 1/1. In terms of biological role, involved in the TCA cycle. Catalyzes the stereospecific interconversion of fumarate to L-malate. In Bradyrhizobium diazoefficiens (strain JCM 10833 / BCRC 13528 / IAM 13628 / NBRC 14792 / USDA 110), this protein is Fumarate hydratase class II 2.